The chain runs to 473 residues: Gamma-aminobutyric acid receptor subunit beta-3 (473 aa).

The signal sequence occupies residues 1-25 (MWGLAGGRLFGIFSAPVLVAVVCCA). Residues 26–246 (QSVNDPGNMS…FRLKRNIGYF (221 aa)) lie on the Extracellular side of the membrane. Asn33 and Asn105 each carry an N-linked (GlcNAc...) asparagine glycan. Benzamidine is bound at residue 120 to 122 (DTY). Tyr122 contacts 4-aminobutanoate. Tyr122 is a histamine binding site. A disulfide bridge connects residues Cys161 and Cys175. The N-linked (GlcNAc...) asparagine glycan is linked to Asn174. Residues Glu180 and Tyr182 each contribute to the 4-aminobutanoate site. Benzamidine contacts are provided by residues 180–182 (ESY) and Phe225. 181-182 (SY) contacts histamine. Residue Thr227 coordinates 4-aminobutanoate. Thr227 serves as a coordination point for histamine. A helical membrane pass occupies residues 247–267 (ILQTYMPSILITILSWVSFWI). Topologically, residues 268–271 (NYDA) are cytoplasmic. Residues 272-292 (SAARVALGITTVLTMTTINTH) traverse the membrane as a helical segment. The Extracellular portion of the chain corresponds to 293–304 (LRETLPKIPYVK). A helical transmembrane segment spans residues 305–328 (AIDMYLMGCFVFVFLALLEYAFVN). At 329-447 (YIFFGRGPQR…KIPDLTDVNA (119 aa)) the chain is on the cytoplasmic side. A helical membrane pass occupies residues 448 to 470 (IDRWSRIVFPFTFSLFNLVYWLY). At 471–473 (YVN) the chain is on the extracellular side.

It belongs to the ligand-gated ion channel (TC 1.A.9) family. Gamma-aminobutyric acid receptor (TC 1.A.9.5) subfamily. GABRB3 sub-subfamily. Heteropentamer, formed by a combination of alpha (GABRA1-6), beta (GABRB1-3), gamma (GABRG1-3), delta (GABRD), epsilon (GABRE), rho (GABRR1-3), pi (GABRP) and theta (GABRQ) chains, each subunit exhibiting distinct physiological and pharmacological properties. Can form functional homopentamers (in vitro). Interacts with UBQLN1. May interact with KIF21B. Identified in a complex of 720 kDa composed of LHFPL4, NLGN2, GABRA1, GABRB2, GABRG2 and GABRB3. Interacts with LHFPL4. Interacts with GIT1; this interaction is required for synaptic GABRB3 surface stability and inhibitory synapse strength.

It is found in the postsynaptic cell membrane. The protein localises to the cell membrane. It localises to the cytoplasmic vesicle membrane. The catalysed reaction is chloride(in) = chloride(out). Potentiated by histamine. Functionally, beta subunit of the heteropentameric ligand-gated chloride channel gated by gamma-aminobutyric acid (GABA), a major inhibitory neurotransmitter in the brain. GABA-gated chloride channels, also named GABA(A) receptors (GABAAR), consist of five subunits arranged around a central pore and contain GABA active binding site(s) located at the alpha and beta subunit interface(s). GABAARs containing beta-3/GABRB3 subunit are found at both synaptic and extrasynaptic sites. When activated by GABA, GABAARs selectively allow the flow of chloride anions across the cell membrane down their electrochemical gradient. Chloride influx into the postsynaptic neuron following GABAAR opening decreases the neuron ability to generate a new action potential, thereby reducing nerve transmission. GABAARs containing alpha-1 and beta-3 subunits exhibit synaptogenic activity; the gamma-2 subunit being necessary but not sufficient to induce rapid synaptic contacts formation. Extrasynaptic beta-3 receptors contribute to the tonic GABAergic inhibition. GABAARs containing alpha-1, beta-3 and epsilon subunits may also permit spontaneous chloride channel activity while preserving the structural information required for GABA-gated openings. Beta-containing GABAARs can simultaneously bind GABA and histamine where histamine binds at the interface of two neighboring beta subunits, which may be involved in the regulation of sleep and wakefulness. Plays an important role in somatosensation and in the production of antinociception. The polypeptide is Gamma-aminobutyric acid receptor subunit beta-3 (Homo sapiens (Human)).